The primary structure comprises 995 residues: Probable copper-transporting ATPase HMA5 (995 aa).

Residues 1 to 299 (MATKLLSLTC…QGEIKQYYKS (299 aa)) are Cytoplasmic-facing. 2 HMA domains span residues 51 to 117 (SRAV…FEAS) and 129 to 195 (QVCR…FEAV). Cu(+) contacts are provided by Cys-62, Cys-65, Cys-140, and Cys-143. The HMA 3; degenerate domain occupies 204–270 (SKIDLKIDGE…VIESTVFGHS (67 aa)). The helical transmembrane segment at 300–321 (FLWSLVFTVPVFLTAMVFMYIP) threads the bilayer. Over 322 to 340 (GIKDLLMFKVINMLTVGEI) the chain is Extracellular. A helical transmembrane segment spans residues 341–360 (IRCVLATPVQFVIGWRFYTG). Topologically, residues 361–367 (SYKALRR) are cytoplasmic. A helical membrane pass occupies residues 368–388 (GSANMDVLIALGTNAAYFYSL). Residues 389–406 (YTVLRAATSPDFKGVDFF) are Extracellular-facing. Residues 407–427 (ETSAMLISFIILGKYLEVMAK) traverse the membrane as a helical segment. Residues 428 to 561 (GKTSQAIAKL…KAPVQKLADR (134 aa)) lie on the Cytoplasmic side of the membrane. A helical transmembrane segment spans residues 562–584 (ISKFFVPLVIFLSFSTWLAWFLA). Residues 585–605 (GKLHWYPESWIPSSMDSFELA) are Extracellular-facing. Residues 606–623 (LQFGISVMVIACPCALGL) traverse the membrane as a helical segment. Residues 624-920 (ATPTAVMVGT…DLSRKTFSRI (297 aa)) are Cytoplasmic-facing. The active-site 4-aspartylphosphate intermediate is Asp-661. 2 residues coordinate Mg(2+): Asp-866 and Asp-870. Residues 921–940 (RLNYVWALGYNLMGIPIAAG) traverse the membrane as a helical segment. Residues 941 to 952 (VLFPGTRFRLPP) lie on the Extracellular side of the membrane. Residues 953-971 (WIAGAAMAASSVSVVCCSL) form a helical membrane-spanning segment. Over 972–995 (LLKNYKRPKKLDHLEIREIQVERV) the chain is Cytoplasmic.

The protein belongs to the cation transport ATPase (P-type) (TC 3.A.3) family. Type IB subfamily. Interacts with ATX1. As to expression, expressed in roots and flowers.

It is found in the membrane. It catalyses the reaction Cu(+)(in) + ATP + H2O = Cu(+)(out) + ADP + phosphate + H(+). Its function is as follows. Involved in copper import into the cell. May play a role in copper detoxification in roots. This is Probable copper-transporting ATPase HMA5 (HMA5) from Arabidopsis thaliana (Mouse-ear cress).